The chain runs to 217 residues: Urease accessory protein UreE (217 aa).

Positions 148–217 (AYGEAAAHGH…DHDHGSGHHH (70 aa)) are disordered. The span at 160 to 171 (AGHDHAHDHDHG) shows a compositional bias: basic and acidic residues. A compositionally biased stretch (low complexity) spans 193 to 202 (AAAPAPHVHG). Over residues 206-217 (GHDHDHGSGHHH) the composition is skewed to basic and acidic residues.

Belongs to the UreE family.

It is found in the cytoplasm. Functionally, involved in urease metallocenter assembly. Binds nickel. Probably functions as a nickel donor during metallocenter assembly. This is Urease accessory protein UreE from Methylibium petroleiphilum (strain ATCC BAA-1232 / LMG 22953 / PM1).